We begin with the raw amino-acid sequence, 156 residues long: Cyanate hydratase (156 aa).

Residues R96, E99, and S122 contribute to the active site.

This sequence belongs to the cyanase family.

It carries out the reaction cyanate + hydrogencarbonate + 3 H(+) = NH4(+) + 2 CO2. Catalyzes the reaction of cyanate with bicarbonate to produce ammonia and carbon dioxide. This is Cyanate hydratase from Burkholderia lata (strain ATCC 17760 / DSM 23089 / LMG 22485 / NCIMB 9086 / R18194 / 383).